A 1010-amino-acid chain; its full sequence is 2-oxoglutarate dehydrogenase-like, mitochondrial (1010 aa).

Residues 1–73 (MSQLRLLPSR…RSVHKSWDSF (73 aa)) constitute a mitochondrion transit peptide. 3 residues coordinate Ca(2+): H130, D143, and D145. R299, D398, N431, I433, and Q663 together coordinate thiamine diphosphate. Residues D398, N431, and I433 each coordinate Mg(2+).

It belongs to the alpha-ketoglutarate dehydrogenase family. The OGDHC complex comprises multiple copies of three catalytic enzyme components, the 2-oxoglutarate dehydrogenase (OGDH/E1), the dihydrolipoamide dehydrogenase (DLST/E2) and the dihydrolipoamide dehydrogenase (DLD/E3). OGDHL/E1-like isoenzyme may replace OGDH in the OGDHC complex in the brain. The presence of either ODGH/E1 or ODGHL/E1-like isoenzyme in the complex may depend on its tissular distribution. Requires thiamine diphosphate as cofactor. The cofactor is Mg(2+).

The protein resides in the mitochondrion matrix. The enzyme catalyses N(6)-[(R)-lipoyl]-L-lysyl-[protein] + 2-oxoglutarate + H(+) = N(6)-[(R)-S(8)-succinyldihydrolipoyl]-L-lysyl-[protein] + CO2. Its function is as follows. 2-oxoglutarate dehydrogenase (E1-like) component of the 2-oxoglutarate dehydrogenase multienzyme complex (OGDHC) which mediates the decarboxylation of alpha-ketoglutarate in the tricarboxylic acid cycle. The OGDHC complex catalyzes the overall conversion of 2-oxoglutarate to succinyl-CoA and CO(2) while reducing NAD(+) to NADH. The OGDHC complex is mainly active in the mitochondrion. Involved in the inhibition of cell proliferation and in apoptosis. The polypeptide is 2-oxoglutarate dehydrogenase-like, mitochondrial (OGDHL) (Pongo abelii (Sumatran orangutan)).